The sequence spans 404 residues: Glucose-1-phosphate adenylyltransferase (404 aa).

Alpha-D-glucose 1-phosphate is bound by residues Tyr99, Gly164, 179–180 (EK), and Ser197.

Belongs to the bacterial/plant glucose-1-phosphate adenylyltransferase family.

It catalyses the reaction alpha-D-glucose 1-phosphate + ATP + H(+) = ADP-alpha-D-glucose + diphosphate. It functions in the pathway capsule biogenesis; capsule polysaccharide biosynthesis. Its pathway is glycan biosynthesis; glycogen biosynthesis. Its function is as follows. Involved in the biosynthesis of ADP-glucose, a building block, required in the biosynthesis of maltose-1-phosphate (M1P) and in the elongation reactions to produce linear alpha-1,4-glucans. Catalyzes the reaction between ATP and alpha-D-glucose 1-phosphate (G1P) to produce pyrophosphate and ADP-Glc. The protein is Glucose-1-phosphate adenylyltransferase of Mycobacterium leprae (strain Br4923).